A 3124-amino-acid polypeptide reads, in one-letter code: Collagen alpha-1(XII) chain (3124 aa).

A signal peptide spans 1–23 (MRTALCSAVAALCAAALLSSIEA). The Fibronectin type-III 1 domain occupies 27–117 (PPSDLNFTII…GQLTIQTGGP (91 aa)). A glycan (N-linked (GlcNAc...) asparagine) is linked at Asn32. A VWFA 1 domain is found at 139–311 (DLVFLVDGSW…DGIVDIQNEI (173 aa)). O-linked (Xyl...) (chondroitin sulfate) serine glycosylation occurs at Ser328. The Fibronectin type-III 2 domain occupies 335–424 (PASNLVATQI…ITIMEKTQQV (90 aa)). The region spanning 439–615 (DVVFLVDGSY…RISFELTQSV (177 aa)) is the VWFA 2 domain. Fibronectin type-III domains follow at residues 633-722 (PAKN…LEVK), 724-815 (APRN…VRGN), 816-906 (PRNL…LEER), 908-998 (SPRN…VSQS), 999-1087 (ARTV…ASPF), and 1089-1179 (PPRN…TLSD). Residues Ser797, Ser890, and Ser981 are each glycosylated (O-linked (Xyl...) (chondroitin sulfate) serine). Residues Asn1006, Asn1032, and Asn1044 are each glycosylated (N-linked (GlcNAc...) asparagine). The segment at 1075–1100 (KSRKAEGTTASPFKPPRNLRTSDSTM) is disordered. A VWFA 3 domain is found at 1199–1371 (DIVLLVDGSW…SFLASIGEDV (173 aa)). Fibronectin type-III domains lie at 1387–1476 (PPSN…YPLS), 1477–1568 (SVRN…LPLP), 1569–1659 (GPRG…VPSP), 1660–1756 (VNLR…TPAP), 1759–1853 (GPRN…TVKN), 1854–1939 (MLVY…LERG), 1940–2030 (TPRN…LPRS), 2031–2121 (GPRN…VGLL), 2122–2210 (PPQN…LYLN), and 2211–2299 (VTDL…LKPT). N-linked (GlcNAc...) asparagine glycosylation is present at Asn1512. Residue Asn1767 is glycosylated (N-linked (GlcNAc...) asparagine). 2 N-linked (GlcNAc...) asparagine glycosylation sites follow: Asn2210 and Asn2273. In terms of domain architecture, VWFA 4 spans 2327–2500 (DIVFLTDASW…DAFEKIQDNL (174 aa)). Residues 2455-2750 (SGFSVFVVGV…NACTCTQDSV (296 aa)) are nonhelical region (NC3). The region spanning 2524 to 2716 (GFKMLESYNL…IQNFDIVCSP (193 aa)) is the Laminin G-like domain. Residues Asn2532 and Asn2683 are each glycosylated (N-linked (GlcNAc...) asparagine). Disordered regions lie at residues 2749–2900 (SVGP…GDRG) and 2935–3080 (PNDY…EGEP). 3 Collagen-like domains span residues 2751–2802 (GPPG…GPNG), 2807–2858 (GEPG…GPRG), and 2859–2900 (PPGP…GDRG). The tract at residues 2751–2902 (GPPGPPGPPG…KGEKGDRGDI (152 aa)) is triple-helical region (COL2) with 1 imperfection. Composition is skewed to pro residues over residues 2752 to 2761 (PPGPPGPPGG) and 2788 to 2798 (PPGPQGPPGPQ). The span at 2821–2830 (PGLPGRSGTP) shows a compositional bias: low complexity. Positions 2832–2841 (LPGPPGPVGP) are enriched in pro residues. 2 stretches are compositionally biased toward low complexity: residues 2842-2854 (PGER…DGPT) and 2865-2878 (APGV…SGKP). A Cell attachment site motif is present at residues 2899–2901 (RGD). The nonhelical region (NC2) stretch occupies residues 2903-2945 (ASQNMMRAVARQVCEQLINGQMSRFNQMLNQIPNDYYSNRNQP). The segment covering 2935-2944 (PNDYYSNRNQ) has biased composition (polar residues). Pro residues predominate over residues 2945–2954 (PGPPGPPGPP). Residues 2945–2994 (PGPPGPPGPPGAAGTRGEPGPGGRPGFPGPPGVQGPPGERGMPGEKGERG) enclose the Collagen-like 4 domain. Residues 2946 to 3048 (GPPGPPGPPG…RGPPGPPGYC (103 aa)) are triple-helical region (COL1) with 2 imperfections. The segment covering 2961–2970 (GEPGPGGRPG) has biased composition (gly residues). The segment covering 3010-3024 (QGESRTGPPGSTGSR) has biased composition (low complexity). The segment at 3049 to 3124 (DSSQCASIPY…SLSRKAKRKP (76 aa)) is nonhelical region (NC1).

It belongs to the fibril-associated collagens with interrupted helices (FACIT) family. In terms of assembly, trimer of identical chains each containing 190 kDa of non-triple-helical sequences. In terms of processing, the triple-helical tail is stabilized by disulfide bonds at each end. Prolines at the third position of the tripeptide repeating unit (G-X-Y) are hydroxylated in some or all of the chains. Post-translationally, O-glycosylated; glycosaminoglycan of chondroitin-sulfate type. Type XII collagen is present in tendons, ligaments, perichondrium, and periosteum, all dense connective tissues containing type I collagen.

It localises to the secreted. The protein localises to the extracellular space. The protein resides in the extracellular matrix. In terms of biological role, type XII collagen interacts with type I collagen-containing fibrils, the COL1 domain could be associated with the surface of the fibrils, and the COL2 and NC3 domains may be localized in the perifibrillar matrix. This chain is Collagen alpha-1(XII) chain (COL12A1), found in Gallus gallus (Chicken).